Reading from the N-terminus, the 130-residue chain is Glycoprotein hormone beta-5 (130 aa).

A signal peptide spans 1-24; sequence MKLAFLFLGPMALLLLAGYGCVLG. 5 cysteine pairs are disulfide-bonded: cysteine 36–cysteine 84, cysteine 50–cysteine 99, cysteine 60–cysteine 115, cysteine 64–cysteine 117, and cysteine 120–cysteine 127. Asparagine 87 carries N-linked (GlcNAc...) asparagine glycosylation.

The protein belongs to the glycoprotein hormones subunit beta family. Heterodimer with GPHA2; this heterodimer interacts with thyroid-stimulating hormone receptor (TSHR), and hence stimulates cAMP production. Post-translationally, N-glycosylated. Highly expressed in brain and at low levels in pituitary. Also found in retina, testis and skin but not in pancreas, parotid, kidney, stomach, liver, colon, small intestine, thyroid, brain or adrenal gland. In pituitary, colocalizes with ACTH, suggesting that it is located in corticotrophs.

It is found in the secreted. Functions as a heterodimeric glycoprotein hormone with GPHA2 able to bind and activate the thyroid-stimulating hormone receptor (TSHR), leading to increased cAMP production. Plays a central role in controlling thyroid cell metabolism. This chain is Glycoprotein hormone beta-5 (GPHB5), found in Homo sapiens (Human).